The primary structure comprises 68 residues: uncharacterized protein (68 aa).

This is an uncharacterized protein from Archaeoglobus fulgidus (strain ATCC 49558 / DSM 4304 / JCM 9628 / NBRC 100126 / VC-16).